Consider the following 151-residue polypeptide: Deoxyuridine 5'-triphosphate nucleotidohydrolase (151 aa).

Residues 70 to 72 (RSG), Asn83, 87 to 89 (LID), and Met97 contribute to the substrate site.

This sequence belongs to the dUTPase family. It depends on Mg(2+) as a cofactor.

The enzyme catalyses dUTP + H2O = dUMP + diphosphate + H(+). It participates in pyrimidine metabolism; dUMP biosynthesis; dUMP from dCTP (dUTP route): step 2/2. Functionally, this enzyme is involved in nucleotide metabolism: it produces dUMP, the immediate precursor of thymidine nucleotides and it decreases the intracellular concentration of dUTP so that uracil cannot be incorporated into DNA. The chain is Deoxyuridine 5'-triphosphate nucleotidohydrolase from Pseudomonas aeruginosa (strain LESB58).